The sequence spans 1403 residues: DNA-directed RNA polymerase subunit beta' (1403 aa).

4 residues coordinate Zn(2+): Cys70, Cys72, Cys85, and Cys88. Residues Asp461, Asp463, and Asp465 each coordinate Mg(2+). Zn(2+)-binding residues include Cys816, Cys890, Cys897, and Cys900.

Belongs to the RNA polymerase beta' chain family. In terms of assembly, the RNAP catalytic core consists of 2 alpha, 1 beta, 1 beta' and 1 omega subunit. When a sigma factor is associated with the core the holoenzyme is formed, which can initiate transcription. Requires Mg(2+) as cofactor. It depends on Zn(2+) as a cofactor.

It catalyses the reaction RNA(n) + a ribonucleoside 5'-triphosphate = RNA(n+1) + diphosphate. Functionally, DNA-dependent RNA polymerase catalyzes the transcription of DNA into RNA using the four ribonucleoside triphosphates as substrates. The chain is DNA-directed RNA polymerase subunit beta' from Dechloromonas aromatica (strain RCB).